We begin with the raw amino-acid sequence, 217 residues long: 3-demethoxyubiquinol 3-hydroxylase (217 aa).

Fe cation contacts are provided by glutamate 66, glutamate 96, histidine 99, glutamate 148, glutamate 180, and histidine 183.

Belongs to the COQ7 family. Requires Fe cation as cofactor.

Its subcellular location is the cell membrane. It carries out the reaction a 5-methoxy-2-methyl-3-(all-trans-polyprenyl)benzene-1,4-diol + AH2 + O2 = a 3-demethylubiquinol + A + H2O. Its pathway is cofactor biosynthesis; ubiquinone biosynthesis. Its function is as follows. Catalyzes the hydroxylation of 2-nonaprenyl-3-methyl-6-methoxy-1,4-benzoquinol during ubiquinone biosynthesis. In Xanthomonas campestris pv. campestris (strain 8004), this protein is 3-demethoxyubiquinol 3-hydroxylase.